Reading from the N-terminus, the 447-residue chain is Tubulin beta chain (447 aa).

8 residues coordinate GTP: Gln-11, Glu-69, Ser-138, Gly-142, Thr-143, Gly-144, Asn-204, and Asn-226. Residue Glu-69 coordinates Mg(2+). A disordered region spans residues 424-447; the sequence is QYQEASVSEGEEEYDEEAPLEGEE. The span at 432-447 shows a compositional bias: acidic residues; that stretch reads EGEEEYDEEAPLEGEE.

The protein belongs to the tubulin family. As to quaternary structure, dimer of alpha and beta chains. A typical microtubule is a hollow water-filled tube with an outer diameter of 25 nm and an inner diameter of 15 nM. Alpha-beta heterodimers associate head-to-tail to form protofilaments running lengthwise along the microtubule wall with the beta-tubulin subunit facing the microtubule plus end conferring a structural polarity. Microtubules usually have 13 protofilaments but different protofilament numbers can be found in some organisms and specialized cells. Mg(2+) serves as cofactor.

It is found in the cytoplasm. It localises to the cytoskeleton. Tubulin is the major constituent of microtubules, a cylinder consisting of laterally associated linear protofilaments composed of alpha- and beta-tubulin heterodimers. Microtubules grow by the addition of GTP-tubulin dimers to the microtubule end, where a stabilizing cap forms. Below the cap, tubulin dimers are in GDP-bound state, owing to GTPase activity of alpha-tubulin. In Venturia inaequalis (Apple scab fungus), this protein is Tubulin beta chain.